The chain runs to 177 residues: B-phycoerythrin beta chain (177 aa).

Positions 50 and 61 each coordinate (2R,3E)-phycoerythrobilin. Asparagine 72 carries the post-translational modification N4-methylasparagine. 2 residues coordinate (2R,3E)-phycoerythrobilin: cysteine 82 and cysteine 158.

Belongs to the phycobiliprotein family. As to quaternary structure, heterotetramer of one alpha-1, one alpha-2, and two beta chains. In terms of processing, contains three covalently linked bilin chromophores.

The protein resides in the plastid. Its subcellular location is the chloroplast thylakoid membrane. Its function is as follows. Light-harvesting photosynthetic bile pigment-protein from the phycobiliprotein complex. This chain is B-phycoerythrin beta chain (cpeB), found in Guillardia theta (Cryptophyte).